The primary structure comprises 92 residues: Small ribosomal subunit protein uS19 (92 aa).

Belongs to the universal ribosomal protein uS19 family.

In terms of biological role, protein S19 forms a complex with S13 that binds strongly to the 16S ribosomal RNA. In Treponema denticola (strain ATCC 35405 / DSM 14222 / CIP 103919 / JCM 8153 / KCTC 15104), this protein is Small ribosomal subunit protein uS19.